The sequence spans 225 residues: Peptidyl-tRNA hydrolase (225 aa).

TRNA is bound at residue Y14. Residue H19 is the Proton acceptor of the active site. 3 residues coordinate tRNA: F64, N66, and N112. The tract at residues 187–225 is disordered; sequence MQPPKPEKPKGEAKPAAPEAPEAAPDTRSALQRLADRFR. Positions 200-210 are enriched in low complexity; the sequence is KPAAPEAPEAA.

This sequence belongs to the PTH family. As to quaternary structure, monomer.

It is found in the cytoplasm. It catalyses the reaction an N-acyl-L-alpha-aminoacyl-tRNA + H2O = an N-acyl-L-amino acid + a tRNA + H(+). In terms of biological role, hydrolyzes ribosome-free peptidyl-tRNAs (with 1 or more amino acids incorporated), which drop off the ribosome during protein synthesis, or as a result of ribosome stalling. Functionally, catalyzes the release of premature peptidyl moieties from peptidyl-tRNA molecules trapped in stalled 50S ribosomal subunits, and thus maintains levels of free tRNAs and 50S ribosomes. This chain is Peptidyl-tRNA hydrolase, found in Cereibacter sphaeroides (strain ATCC 17025 / ATH 2.4.3) (Rhodobacter sphaeroides).